We begin with the raw amino-acid sequence, 294 residues long: Nucleotide-binding protein CLB_3433 (294 aa).

8–15 is an ATP binding site; the sequence is GLSGAGKT. GTP is bound at residue 59–62; that stretch reads DIRG.

Belongs to the RapZ-like family.

Displays ATPase and GTPase activities. The chain is Nucleotide-binding protein CLB_3433 from Clostridium botulinum (strain ATCC 19397 / Type A).